A 426-amino-acid polypeptide reads, in one-letter code: MLENYGAVASLAAFPFPKPALISQLERGETPWCSVPRGALDGEAPRGISSGYPFLKPAGISHPEQVEEPLNLKLQGEGPSLICPEGVLKRKKEDFILKEEIIEEAQDLMVLSSGPQWCGSQELWFGKTCEEKSRLGRWPGYLNGGRMESSTNDIIEVIVKDEMISVEESSGNTDVNNLLGIHHKILNEQIFYICEECGKCFDQNEDFDQHQKTHNGEKVYGCKECGKAFSFRSHCIAHQRIHSGVKPYECQECAKAFVWKSNLIRHQRIHTGEKPFECKECGKGFSQNTSLTQHQRIHTGEKPYTCKECGKSFTRNPALLRHQRMHTGEKPYECKDCGKGFMWNSDLSQHQRVHTGDKPHECTDCGKSFFCKAHLIRHQRIHTGERPYKCNDCGKAFSQNSVLIKHQRRHARDKPYNCQISHLLEH.

The KRAB domain maps to 1-44; sequence MLENYGAVASLAAFPFPKPALISQLERGETPWCSVPRGALDGEA. 8 consecutive C2H2-type zinc fingers follow at residues 192–214, 220–242, 248–270, 276–298, 304–326, 332–354, 360–382, and 388–410; these read YICE…QKTH, YGCK…QRIH, YECQ…QRIH, FECK…QRIH, YTCK…QRMH, YECK…QRVH, HECT…QRIH, and YKCN…QRRH.

This sequence belongs to the krueppel C2H2-type zinc-finger protein family.

Its subcellular location is the nucleus. May be involved in transcriptional regulation. In Homo sapiens (Human), this protein is Zinc finger protein 662 (ZNF662).